A 231-amino-acid polypeptide reads, in one-letter code: Orotate phosphoribosyltransferase (231 aa).

Lysine 29 contributes to the 5-phospho-alpha-D-ribose 1-diphosphate binding site. 37–38 lines the orotate pocket; it reads FF. Residues 75 to 76, arginine 107, lysine 108, lysine 111, histidine 113, and 133 to 141 contribute to the 5-phospho-alpha-D-ribose 1-diphosphate site; these read YK and DDVISRCTA. Orotate contacts are provided by serine 137 and arginine 165.

This sequence belongs to the purine/pyrimidine phosphoribosyltransferase family. PyrE subfamily. As to quaternary structure, homodimer.

It catalyses the reaction orotidine 5'-phosphate + diphosphate = orotate + 5-phospho-alpha-D-ribose 1-diphosphate. The protein operates within pyrimidine metabolism; UMP biosynthesis via de novo pathway; UMP from orotate: step 1/2. Its function is as follows. Catalyzes the transfer of a ribosyl phosphate group from 5-phosphoribose 1-diphosphate to orotate, leading to the formation of orotidine monophosphate (OMP). This is Orotate phosphoribosyltransferase (URA5) from Podospora anserina (Pleurage anserina).